Reading from the N-terminus, the 474-residue chain is tRNA-2-methylthio-N(6)-dimethylallyladenosine synthase (474 aa).

The MTTase N-terminal domain occupies 3 to 120 (KKLHIKTWGC…LPEMIEQIQR (118 aa)). Cys-12, Cys-49, Cys-83, Cys-157, Cys-161, and Cys-164 together coordinate [4Fe-4S] cluster. In terms of domain architecture, Radical SAM core spans 143 to 375 (RADGPTAFVS…QDRITQQAMR (233 aa)). Positions 378 to 441 (RQMLGTVQRI…TNSLRGEFVR (64 aa)) constitute a TRAM domain.

It belongs to the methylthiotransferase family. MiaB subfamily. Monomer. [4Fe-4S] cluster serves as cofactor.

The protein localises to the cytoplasm. It catalyses the reaction N(6)-dimethylallyladenosine(37) in tRNA + (sulfur carrier)-SH + AH2 + 2 S-adenosyl-L-methionine = 2-methylsulfanyl-N(6)-dimethylallyladenosine(37) in tRNA + (sulfur carrier)-H + 5'-deoxyadenosine + L-methionine + A + S-adenosyl-L-homocysteine + 2 H(+). Catalyzes the methylthiolation of N6-(dimethylallyl)adenosine (i(6)A), leading to the formation of 2-methylthio-N6-(dimethylallyl)adenosine (ms(2)i(6)A) at position 37 in tRNAs that read codons beginning with uridine. The sequence is that of tRNA-2-methylthio-N(6)-dimethylallyladenosine synthase from Shewanella frigidimarina (strain NCIMB 400).